The primary structure comprises 109 residues: Enhancer of rudimentary homolog (109 aa).

The protein belongs to the E(R) family. As to quaternary structure, homodimer.

Its function is as follows. May have a role in the cell cycle. This is Enhancer of rudimentary homolog from Arabidopsis thaliana (Mouse-ear cress).